A 359-amino-acid chain; its full sequence is Chorismate synthase (359 aa).

Position 47 (R47) interacts with NADP(+). Residues 123 to 125, G283, 298 to 302, and R326 each bind FMN; these read RSS and KPTSS.

Belongs to the chorismate synthase family. As to quaternary structure, homotetramer. FMNH2 is required as a cofactor.

The enzyme catalyses 5-O-(1-carboxyvinyl)-3-phosphoshikimate = chorismate + phosphate. It functions in the pathway metabolic intermediate biosynthesis; chorismate biosynthesis; chorismate from D-erythrose 4-phosphate and phosphoenolpyruvate: step 7/7. Functionally, catalyzes the anti-1,4-elimination of the C-3 phosphate and the C-6 proR hydrogen from 5-enolpyruvylshikimate-3-phosphate (EPSP) to yield chorismate, which is the branch point compound that serves as the starting substrate for the three terminal pathways of aromatic amino acid biosynthesis. This reaction introduces a second double bond into the aromatic ring system. The chain is Chorismate synthase from Chlamydia pneumoniae (Chlamydophila pneumoniae).